A 690-amino-acid chain; its full sequence is Long-chain fatty acid transport protein 5 (690 aa).

The Cytoplasmic segment spans residues 1 to 30 (MGVRQQLALLLLLLLLLWGLGQPVWPVAVA). 2 helical membrane passes run 31-51 (LTLR…LAML) and 56-76 (LGPW…LTLL). At 77–690 (PARLPPGLRW…QAVCEGTWRL (614 aa)) the chain is on the cytoplasmic side. 292–303 (FIYTSGTTGLPK) contributes to the AMP binding site. Position 501 is a phosphoserine (Ser501).

The protein belongs to the ATP-dependent AMP-binding enzyme family. In terms of tissue distribution, predominantly expressed in liver.

It is found in the endoplasmic reticulum membrane. The protein localises to the microsome. Its subcellular location is the cell membrane. The enzyme catalyses a fatty acid(in) = a fatty acid(out). It carries out the reaction cholate + ATP + CoA = choloyl-CoA + AMP + diphosphate. The catalysed reaction is chenodeoxycholate + ATP + CoA = chenodeoxycholoyl-CoA + AMP + diphosphate. It catalyses the reaction deoxycholate + ATP + CoA = deoxycholoyl-CoA + AMP + diphosphate. The enzyme catalyses lithocholate + ATP + CoA = lithocholoyl-CoA + AMP + diphosphate. It carries out the reaction (25R)-3alpha,7alpha,12alpha-trihydroxy-5beta-cholestan-26-oate + ATP + CoA = (25R)-3alpha,7alpha,12alpha-trihydroxy-5beta-cholestan-26-oyl-CoA + AMP + diphosphate. The catalysed reaction is a very long-chain fatty acid + ATP + CoA = a very long-chain fatty acyl-CoA + AMP + diphosphate. It catalyses the reaction tetracosanoate + ATP + CoA = tetracosanoyl-CoA + AMP + diphosphate. The enzyme catalyses hexacosanoate + ATP + CoA = hexacosanoyl-CoA + AMP + diphosphate. It carries out the reaction a long-chain fatty acid + ATP + CoA = a long-chain fatty acyl-CoA + AMP + diphosphate. The catalysed reaction is octadecanoate + ATP + CoA = octadecanoyl-CoA + AMP + diphosphate. It catalyses the reaction eicosanoate + ATP + CoA = eicosanoyl-CoA + AMP + diphosphate. Its activity is regulated as follows. 3-alpha,7-alpha,12-alpha-trihydroxy-5-beta-cholestanate (THCA) inhibits the activation of cholate. May mediate the import of long-chain fatty acids (LCFA) by facilitating their transport across cell membranes. Also catalyzes the ATP-dependent formation of fatty acyl-CoA using LCFA and very-long-chain fatty acids (VLCFA) as substrates. Mainly functions as a bile acyl-CoA synthetase catalyzing the activation of bile acids via ATP-dependent formation of bile acid CoA thioesters which is necessary for their subsequent conjugation with glycine or taurine. Both primary bile acids (cholic acid and chenodeoxycholic acid) and secondary bile acids (deoxycholic acid and lithocholic acid) are the principal substrates. In vitro, activates 3-alpha,7-alpha,12-alpha-trihydroxy-5-beta-cholestanate ((25R)-3alpha,7alpha,12alpha-trihydroxy-5beta-cholestan-26-oate or THCA), the C27 precursor of cholic acid deriving from the de novo synthesis from cholesterol. Plays an important role in hepatic fatty acid uptake and bile acid reconjugation and recycling but not in de novo synthesis of bile acids. In Homo sapiens (Human), this protein is Long-chain fatty acid transport protein 5 (SLC27A5).